The sequence spans 646 residues: Lamin-1 (646 aa).

The interval 1–85 (MAEKAGEAGV…GSRATSPTSF (85 aa)) is head. A disordered region spans residues 1-94 (MAEKAGEAGV…FSRAQEKEEL (94 aa)). Polar residues-rich tracts occupy residues 48–67 (ATPS…SMSL) and 75–87 (QGSR…SFSR). A coil 1A region spans residues 86 to 126 (SRAQEKEELQNLNDRLAKILNKLNDSEEENRTLKIRLTTVQ). Residues 90–446 (EKEELQNLND…KLLSDEEIRL (357 aa)) form the IF rod domain. Residues 127–137 (QETSADLNDQI) are linker 1. A coil 1B region spans residues 138–281 (GKYRDELERA…SKLQRQSLSV (144 aa)). Residues 281–301 (VTTVDHHSAQSTSRRSGSDFS) are compositionally biased toward polar residues. Residues 281–304 (VTTVDHHSAQSTSRRSGSDFSASV) form a disordered region. The interval 282–299 (TTVDHHSAQSTSRRSGSD) is linker 2. Positions 300-439 (FSASVEDMRS…TELEMYNKLL (140 aa)) are coil 2. The interval 440–646 (SDEEIRLGIT…GKGILGFFGL (207 aa)) is tail. Residues 457–471 (VRHGAKKRKLTETFY) carry the Nuclear localization signal motif. The span at 476–487 (GSRSSAGSRSAG) shows a compositional bias: low complexity. Residues 476–513 (GSRSSAGSRSAGHNSTPVTKSQVTRTTVKTSENKSKAS) form a disordered region. The segment covering 488–505 (HNSTPVTKSQVTRTTVKT) has biased composition (polar residues). The LTD domain occupies 504 to 618 (KTSENKSKAS…NQMATYEVSA (115 aa)).

The protein belongs to the intermediate filament family.

It is found in the nucleus. Functionally, intermediate filament (IF) protein, component of the nuclear lamina, a fibrous layer on the nucleoplasmic side of the inner nuclear membrane, which is thought to provide a framework for the nuclear envelope. This chain is Lamin-1, found in Hypsibius exemplaris (Freshwater tardigrade).